The sequence spans 452 residues: 2-succinylbenzoate--CoA ligase (452 aa).

The protein belongs to the ATP-dependent AMP-binding enzyme family. MenE subfamily.

The enzyme catalyses 2-succinylbenzoate + ATP + CoA = 2-succinylbenzoyl-CoA + AMP + diphosphate. It functions in the pathway quinol/quinone metabolism; 1,4-dihydroxy-2-naphthoate biosynthesis; 1,4-dihydroxy-2-naphthoate from chorismate: step 5/7. Its pathway is quinol/quinone metabolism; menaquinone biosynthesis. In terms of biological role, converts 2-succinylbenzoate (OSB) to 2-succinylbenzoyl-CoA (OSB-CoA). The polypeptide is 2-succinylbenzoate--CoA ligase (Haemophilus influenzae (strain ATCC 51907 / DSM 11121 / KW20 / Rd)).